Consider the following 98-residue polypeptide: MASQPEYENWQQLMDLVKTAVEKDQHELLLTMMMTPDERDALVARINIFCELMKGEMSQRQVSQMLGVGVATITRGSNELKAKSEQEKAVIADLLLKQ.

The DNA-binding element occupies 59-82 (QRQVSQMLGVGVATITRGSNELKA).

It belongs to the TrpR family. Homodimer.

The protein resides in the cytoplasm. This protein is an aporepressor. When complexed with L-tryptophan it binds the operator region of the trp operon and prevents the initiation of transcription. This Vibrio atlanticus (strain LGP32) (Vibrio splendidus (strain Mel32)) protein is Trp operon repressor homolog.